A 533-amino-acid chain; its full sequence is Beta-glucosidase 10 (533 aa).

The N-terminal stretch at 1–23 is a signal peptide; that stretch reads MAVAGAMVMSGGVLLLLLAFTCA. An a beta-D-glucoside-binding site is contributed by Gln-53. A glycan (N-linked (GlcNAc...) asparagine) is linked at Asn-122. A beta-D-glucoside contacts are provided by residues His-157 and 202-203; that span reads NE. Residue Glu-203 is the Proton donor of the active site. A disulfide bridge links Cys-222 with Cys-230. Tyr-369 is a binding site for a beta-D-glucoside. N-linked (GlcNAc...) asparagine glycosylation occurs at Asn-384. Glu-440 is an a beta-D-glucoside binding site. The active-site Nucleophile is the Glu-440. A glycan (N-linked (GlcNAc...) asparagine) is linked at Asn-448. A beta-D-glucoside-binding positions include Trp-489, 496–497, and Phe-505; that span reads EW.

The protein belongs to the glycosyl hydrolase 1 family.

It carries out the reaction Hydrolysis of terminal, non-reducing beta-D-glucosyl residues with release of beta-D-glucose.. In Oryza sativa subsp. japonica (Rice), this protein is Beta-glucosidase 10 (BGLU10).